Consider the following 579-residue polypeptide: General transcription and DNA repair factor IIH subunit TFB1-3 (579 aa).

BSD domains are found at residues 107–161 (LTPA…GKDS) and 186–238 (RTNR…YLYS).

The protein belongs to the TFB1 family. Component of the 7-subunit TFIIH core complex composed of XPB, XPD, TFB1/GTF2H1, GTF2H2/P44, TFB4/GTF2H3, TFB2/GTF2H4 and TFB5/GTF2H5, which is active in NER. The core complex associates with the 3-subunit CDK-activating kinase (CAK) module composed of CYCH1/cyclin H1, CDKD and MAT1/At4g30820 to form the 10-subunit holoenzyme (holo-TFIIH) active in transcription.

The protein localises to the nucleus. Functionally, component of the general transcription and DNA repair factor IIH (TFIIH) core complex, which is involved in general and transcription-coupled nucleotide excision repair (NER) of damaged DNA and, when complexed to CAK, in RNA transcription by RNA polymerase II. In NER, TFIIH acts by opening DNA around the lesion to allow the excision of the damaged oligonucleotide and its replacement by a new DNA fragment. In transcription, TFIIH has an essential role in transcription initiation. When the pre-initiation complex (PIC) has been established, TFIIH is required for promoter opening and promoter escape. Phosphorylation of the C-terminal tail (CTD) of the largest subunit of RNA polymerase II by the kinase module CAK controls the initiation of transcription. This Arabidopsis thaliana (Mouse-ear cress) protein is General transcription and DNA repair factor IIH subunit TFB1-3.